We begin with the raw amino-acid sequence, 531 residues long: Probable rhamnogalacturonate lyase A (531 aa).

The signal sequence occupies residues 1 to 20; that stretch reads MLSKTSLLSLLSLAAGVVNA. Disulfide bonds link cysteine 50–cysteine 93 and cysteine 184–cysteine 193.

This sequence belongs to the polysaccharide lyase 4 family.

It localises to the secreted. It carries out the reaction Endotype eliminative cleavage of L-alpha-rhamnopyranosyl-(1-&gt;4)-alpha-D-galactopyranosyluronic acid bonds of rhamnogalacturonan I domains in ramified hairy regions of pectin leaving L-rhamnopyranose at the reducing end and 4-deoxy-4,5-unsaturated D-galactopyranosyluronic acid at the non-reducing end.. Pectinolytic enzymes consist of four classes of enzymes: pectin lyase, polygalacturonase, pectin methylesterase and rhamnogalacturonase. Degrades the rhamnogalacturonan I (RG-I) backbone of pectin. This Aspergillus niger (strain ATCC MYA-4892 / CBS 513.88 / FGSC A1513) protein is Probable rhamnogalacturonate lyase A (rglA).